We begin with the raw amino-acid sequence, 512 residues long: Neuronal acetylcholine receptor subunit alpha-2 (512 aa).

The signal sequence occupies residues 1-27 (MAPSHPAFQFWIHLYLWCLLLMPAVLA). Residues 28–241 (QQGSHTHAED…VTYYFVIRRL (214 aa)) are Extracellular-facing. Asparagine 56 and asparagine 106 each carry an N-linked (GlcNAc...) asparagine glycan. The cysteines at positions 160 and 174 are disulfide-linked. A glycan (N-linked (GlcNAc...) asparagine) is linked at asparagine 212. The cysteines at positions 224 and 225 are disulfide-linked. 3 helical membrane-spanning segments follow: residues 242–266 (PLFY…VFYL), 274–292 (ITLC…LLIT), and 308–329 (YLLF…VLNV). Topologically, residues 330 to 485 (HHRSPSTHNM…WKYVAMVVDR (156 aa)) are cytoplasmic. A helical transmembrane segment spans residues 486–504 (IFLWLFIIVCFLGTIGLFL).

It belongs to the ligand-gated ion channel (TC 1.A.9) family. Acetylcholine receptor (TC 1.A.9.1) subfamily. Alpha-2/CHRNA2 sub-subfamily. As to quaternary structure, neuronal AChR is composed of two different types of subunits: alpha and non-alpha (beta). CHRNA2/alpha-2 subunit can be combined to CHRNB2/beta-2 or CHRNB4/beta-4 to give rise to functional receptors. Both CHRNA2:CHRNB2 and CHRNA2:CHRNB4 nAChR complexes are heteropentamers with two subtypes: LS (low agonist sensitivity) with a (CHRNA2)3:(CHRNB2/4)2 and HS (high agonist sensitivity) with a (CHRNA2)2:(CHRNB2/4)3 stoichiometries; the subtypes differ in their subunit binding interfaces which are involved in ligand binding.

The protein resides in the synaptic cell membrane. It is found in the cell membrane. It catalyses the reaction Ca(2+)(in) = Ca(2+)(out). The catalysed reaction is K(+)(in) = K(+)(out). The enzyme catalyses Na(+)(in) = Na(+)(out). In terms of biological role, component of neuronal acetylcholine receptors (nAChRs) that function as pentameric, ligand-gated cation channels with high calcium permeability among other activities. nAChRs are excitatory neurotrasnmitter receptors formed by a collection of nAChR subunits known to mediate synaptic transmission in the nervous system and the neuromuscular junction. Each nAchR subunit confers differential attributes to channel properties, including activation, deactivation and desensitization kinetics, pH sensitivity, cation permeability, and binding to allosteric modulators. CHRNA2 forms heteropentameric neuronal acetylcholine receptors with CHRNB2 and CHRNB4 and plays a role in nicotine dependence. The sequence is that of Neuronal acetylcholine receptor subunit alpha-2 (Chrna2) from Mus musculus (Mouse).